Here is a 179-residue protein sequence, read N- to C-terminus: Large ribosomal subunit protein uL5 (179 aa).

It belongs to the universal ribosomal protein uL5 family. In terms of assembly, part of the 50S ribosomal subunit; part of the 5S rRNA/L5/L18/L25 subcomplex. Contacts the 5S rRNA and the P site tRNA. Forms a bridge to the 30S subunit in the 70S ribosome.

Its function is as follows. This is one of the proteins that bind and probably mediate the attachment of the 5S RNA into the large ribosomal subunit, where it forms part of the central protuberance. In the 70S ribosome it contacts protein S13 of the 30S subunit (bridge B1b), connecting the 2 subunits; this bridge is implicated in subunit movement. Contacts the P site tRNA; the 5S rRNA and some of its associated proteins might help stabilize positioning of ribosome-bound tRNAs. This is Large ribosomal subunit protein uL5 from Dehalococcoides mccartyi (strain ATCC BAA-2100 / JCM 16839 / KCTC 5957 / BAV1).